The sequence spans 304 residues: Porphobilinogen deaminase (304 aa).

The residue at position 240 (C240) is an S-(dipyrrolylmethanemethyl)cysteine.

Belongs to the HMBS family. Monomer. Dipyrromethane serves as cofactor.

It carries out the reaction 4 porphobilinogen + H2O = hydroxymethylbilane + 4 NH4(+). Its pathway is porphyrin-containing compound metabolism; protoporphyrin-IX biosynthesis; coproporphyrinogen-III from 5-aminolevulinate: step 2/4. Functionally, tetrapolymerization of the monopyrrole PBG into the hydroxymethylbilane pre-uroporphyrinogen in several discrete steps. This is Porphobilinogen deaminase from Xanthomonas oryzae pv. oryzae (strain MAFF 311018).